A 422-amino-acid polypeptide reads, in one-letter code: DNA-binding transcriptional activator AdeR (422 aa).

The protein belongs to the CdaR family.

In terms of biological role, activates ald expression in response to alanine availability and is important for normal sporulation in B.subtilis. The protein is DNA-binding transcriptional activator AdeR of Bacillus subtilis (strain 168).